The sequence spans 423 residues: Cop9 signalosome complex subunit 12 (423 aa).

A PCI domain is found at 232–418; it reads GFFHLNEALL…RCIVFSKKEP (187 aa).

The protein belongs to the CSN12 family. Component of a COP9 signalosome-like (CSN) complex, composed of RRI1/CSN5, CSN9, RRI2/CSN10, PCI8/CSN11, CSN12 and CSI1. In the complex, it probably interacts directly with RRI1/CSN5, CSN9, RRI2/CSN10 and CSI1. Interacts with SEM1 and THP3.

It is found in the cytoplasm. It localises to the nucleus. Its function is as follows. Component of the COP9 signalosome (CSN) complex that acts as an regulator of the ubiquitin (Ubl) conjugation pathway by mediating the deneddylation of the cullin subunit of SCF-type E3 ubiquitin-protein ligase complexes. The CSN complex is involved in the regulation of the mating pheromone response. CSN12 forms a complex with THP3 that is recruited to transcribed genes and required for transcription elongation. The polypeptide is Cop9 signalosome complex subunit 12 (CSN12) (Saccharomyces cerevisiae (strain ATCC 204508 / S288c) (Baker's yeast)).